Here is a 115-residue protein sequence, read N- to C-terminus: Transmembrane protein 218 (115 aa).

3 helical membrane passes run 5-25 (VLGV…VLLL), 38-58 (FSIV…LLFP), and 81-101 (YVLL…LLTH).

It belongs to the TMEM218 family. As to quaternary structure, interacts with TMEM67.

The protein localises to the membrane. It localises to the cell projection. It is found in the cilium. May be involved in ciliary biogenesis or function. The protein is Transmembrane protein 218 (Tmem218) of Mus musculus (Mouse).